The sequence spans 240 residues: Pyridoxine 5'-phosphate synthase (240 aa).

N7 is a binding site for 3-amino-2-oxopropyl phosphate. 9-10 (DH) contributes to the 1-deoxy-D-xylulose 5-phosphate binding site. Residue R18 coordinates 3-amino-2-oxopropyl phosphate. H43 acts as the Proton acceptor in catalysis. 1-deoxy-D-xylulose 5-phosphate-binding residues include R45 and H50. The active-site Proton acceptor is the E70. T100 is a binding site for 1-deoxy-D-xylulose 5-phosphate. The Proton donor role is filled by H191. Residues G192 and 213 to 214 (GH) contribute to the 3-amino-2-oxopropyl phosphate site.

Belongs to the PNP synthase family. As to quaternary structure, homooctamer; tetramer of dimers.

It is found in the cytoplasm. It catalyses the reaction 3-amino-2-oxopropyl phosphate + 1-deoxy-D-xylulose 5-phosphate = pyridoxine 5'-phosphate + phosphate + 2 H2O + H(+). Its pathway is cofactor biosynthesis; pyridoxine 5'-phosphate biosynthesis; pyridoxine 5'-phosphate from D-erythrose 4-phosphate: step 5/5. In terms of biological role, catalyzes the complicated ring closure reaction between the two acyclic compounds 1-deoxy-D-xylulose-5-phosphate (DXP) and 3-amino-2-oxopropyl phosphate (1-amino-acetone-3-phosphate or AAP) to form pyridoxine 5'-phosphate (PNP) and inorganic phosphate. This Synechococcus elongatus (strain ATCC 33912 / PCC 7942 / FACHB-805) (Anacystis nidulans R2) protein is Pyridoxine 5'-phosphate synthase.